Consider the following 313-residue polypeptide: Homoserine O-succinyltransferase (313 aa).

The active-site Acyl-thioester intermediate is the C142. Substrate-binding residues include K163 and S192. Catalysis depends on H235, which acts as the Proton acceptor. E237 is a catalytic residue. R249 serves as a coordination point for substrate.

It belongs to the MetA family.

The protein localises to the cytoplasm. The enzyme catalyses L-homoserine + succinyl-CoA = O-succinyl-L-homoserine + CoA. It functions in the pathway amino-acid biosynthesis; L-methionine biosynthesis via de novo pathway; O-succinyl-L-homoserine from L-homoserine: step 1/1. Transfers a succinyl group from succinyl-CoA to L-homoserine, forming succinyl-L-homoserine. The polypeptide is Homoserine O-succinyltransferase (Shewanella sp. (strain MR-4)).